The sequence spans 347 residues: NADH-ubiquinone oxidoreductase chain 2 (347 aa).

Transmembrane regions (helical) follow at residues 1–21 (MNPL…VIVM), 25–45 (HWLT…PMLM), 59–79 (YFLT…INLT), 96–116 (IIMT…FWVP), 127–147 (CLIL…MISP), 149–169 (INLN…GWGG), 178–198 (IMAY…AYNP), 200–220 (MTML…MLLI), 237–257 (IPLV…LPPL), 276–296 (IILP…YMRL), and 325–345 (LLSP…TMLL).

This sequence belongs to the complex I subunit 2 family. As to quaternary structure, core subunit of respiratory chain NADH dehydrogenase (Complex I) which is composed of 45 different subunits. Interacts with TMEM242.

It is found in the mitochondrion inner membrane. It catalyses the reaction a ubiquinone + NADH + 5 H(+)(in) = a ubiquinol + NAD(+) + 4 H(+)(out). Functionally, core subunit of the mitochondrial membrane respiratory chain NADH dehydrogenase (Complex I) which catalyzes electron transfer from NADH through the respiratory chain, using ubiquinone as an electron acceptor. Essential for the catalytic activity and assembly of complex I. The sequence is that of NADH-ubiquinone oxidoreductase chain 2 from Natalus tumidirostris (Trinidadian funnel-eared bat).